A 521-amino-acid polypeptide reads, in one-letter code: Occludin (521 aa).

The segment at 1-20 is disordered; it reads MSVRPFESPPPYRPDEFKPN. Over 1–66 the chain is Cytoplasmic; it reads MSVRPFESPP…KWTSPPGVIR (66 aa). Residues 60–267 enclose the MARVEL domain; that stretch reads SPPGVIRILS…IIFFAVKTRR (208 aa). A helical transmembrane segment spans residues 67–89; the sequence is ILSMLIIVMCIAIFACVASTLAW. Topologically, residues 90 to 133 are extracellular; that stretch reads DRGYGTGLFGGSLNYPYSGFGYGGGYGGGYGGYGYGYGGYTDPR. The helical transmembrane segment at 134–158 threads the bilayer; that stretch reads AAKGFLLAMAAFCFIASLVIFVTSV. Topologically, residues 159–168 are cytoplasmic; that stretch reads IRSGMSRTRR. The chain crosses the membrane as a helical span at residues 169–193; it reads YYLIVIIVSAILGIMVFIATIVYIM. Residues 194-241 are Extracellular-facing; sequence GVNPTAQASGSMYGSQIYMICNQFYTPGGTGLYVDQYLYHYCVVDPQE. Cys214 and Cys235 are oxidised to a cystine. Residues 242-263 traverse the membrane as a helical segment; the sequence is AIAIVLGFMIIVAFALIIFFAV. Residues 264 to 521 are Cytoplasmic-facing; it reads KTRRKMDRYD…MVGDYDRRKP (258 aa). A Phosphoserine modification is found at Ser300. The segment at 300–329 is disordered; the sequence is SAGTQDMPPPPSDYAERVDSPMAYSSNGKV. Thr303 is modified (phosphothreonine). Residues Ser311 and Ser319 each carry the phosphoserine modification. Ser338 carries the post-translational modification Phosphoserine; by PKC; in vitro. Ser358 is modified (phosphoserine). The disordered stretch occupies residues 361–405; sequence DFRQPRYSSNGNLETPSKRAPTKGKAGKGKRTDPDHYETDYTTGG. Positions 366 to 375 are enriched in polar residues; that stretch reads RYSSNGNLET. The residue at position 367 (Tyr367) is a Phosphotyrosine. Phosphoserine is present on residues Ser368 and Ser369. Over residues 380 to 389 the composition is skewed to basic residues; the sequence is APTKGKAGKG. Residues 390–399 are compositionally biased toward basic and acidic residues; the sequence is KRTDPDHYET. Phosphotyrosine is present on residues Tyr397 and Tyr401. The residue at position 402 (Thr402) is a Phosphothreonine; by PKC/PRKCH. At Thr403 the chain carries Phosphothreonine. Ser407 is subject to Phosphoserine. Residues 413–521 enclose the OCEL domain; sequence EDWVREYPPI…MVGDYDRRKP (109 aa). Positions 424 to 488 form a coiled coil; sequence SDQQRQLYKR…EYNRLKQVKG (65 aa). Ser489 carries the post-translational modification Phosphoserine.

The protein belongs to the ELL/occludin family. As to quaternary structure, interacts with TJP1/ZO1. Interacts with VAPA. Interacts with CLDN1, CLDN6, CLDN9, CLDN11, CLDN12 and CLDN17. Interacts with PLSCR1. Interacts with LSR, ILDR1 and ILDR2. Interacts with TJP2/ZO2. In terms of processing, dephosphorylated by PTPRJ. May be phosphorylated by PKC during translocation to cell-cell contacts. Localized at tight junctions of both epithelial and endothelial cells. Highly expressed in the testis, kidney, lung, liver and brain. Not detected in skeletal muscle, spleen and heart.

It localises to the cell membrane. Its subcellular location is the cell junction. The protein localises to the tight junction. Its function is as follows. May play a role in the formation and regulation of the tight junction (TJ) paracellular permeability barrier. The sequence is that of Occludin (Ocln) from Mus musculus (Mouse).